Reading from the N-terminus, the 220-residue chain is Uracil-DNA glycosylase (220 aa).

The active-site Proton acceptor is D65.

The protein belongs to the uracil-DNA glycosylase (UDG) superfamily. UNG family.

It localises to the cytoplasm. The enzyme catalyses Hydrolyzes single-stranded DNA or mismatched double-stranded DNA and polynucleotides, releasing free uracil.. Functionally, excises uracil residues from the DNA which can arise as a result of misincorporation of dUMP residues by DNA polymerase or due to deamination of cytosine. This chain is Uracil-DNA glycosylase, found in Azobacteroides pseudotrichonymphae genomovar. CFP2.